The following is an 85-amino-acid chain: uncharacterized protein (85 aa).

Disordered regions lie at residues 1-22 (MFAP…TSGF) and 41-85 (EKER…SFLR). The span at 75 to 85 (FPSNYRGSFLR) shows a compositional bias: polar residues.

This is an uncharacterized protein from Dryophytes versicolor (chameleon treefrog).